Here is a 341-residue protein sequence, read N- to C-terminus: Phosphoribosylformylglycinamidine cyclo-ligase (341 aa).

Belongs to the AIR synthase family.

It is found in the cytoplasm. The enzyme catalyses 2-formamido-N(1)-(5-O-phospho-beta-D-ribosyl)acetamidine + ATP = 5-amino-1-(5-phospho-beta-D-ribosyl)imidazole + ADP + phosphate + H(+). It participates in purine metabolism; IMP biosynthesis via de novo pathway; 5-amino-1-(5-phospho-D-ribosyl)imidazole from N(2)-formyl-N(1)-(5-phospho-D-ribosyl)glycinamide: step 2/2. This is Phosphoribosylformylglycinamidine cyclo-ligase from Synechocystis sp. (strain ATCC 27184 / PCC 6803 / Kazusa).